Here is a 472-residue protein sequence, read N- to C-terminus: Cannabinoid receptor 1 (472 aa).

Residues 1–116 (MKSILDGLAD…CFMILNPSQQ (116 aa)) lie on the Extracellular side of the membrane. The tract at residues 2 to 23 (KSILDGLADTTFRTITTDLLYV) is required for mitochondrial localization. N-linked (GlcNAc...) asparagine glycans are attached at residues Asn77 and Asn83. The chain crosses the membrane as a helical span at residues 117–142 (LAIAVLSLTLGTFTVLENLLVLCVIL). Topologically, residues 143 to 154 (HSRSLRCRPSYH) are cytoplasmic. Residues 155–175 (FIGSLAVADLLGSVIFVYSFV) form a helical membrane-spanning segment. Residues 176 to 187 (DFHVFHRKDSPN) lie on the Extracellular side of the membrane. A helical membrane pass occupies residues 188–212 (VFLFKLGGVTASFTASVGSLFLTAI). At 213–232 (DRYISIHRPLAYKKIVTRPK) the chain is on the cytoplasmic side. The helical transmembrane segment at 233-255 (AVVAFCLMWTIAIVIAVLPLLGW) threads the bilayer. At 256 to 273 (NCKKLQSVCSDIFPLIDE) the chain is on the extracellular side. A helical transmembrane segment spans residues 274–299 (TYLMFWIGVTSVLLLFIVYAYMYILW). Topologically, residues 300–344 (KAHIHAVRMIQRGTQKSIIIHTSEDGKVQVTRPDQARMDIRLAKT) are cytoplasmic. Residues 345-365 (LVLILVVLIICWGPLLAIMVY) traverse the membrane as a helical segment. Residues 366-377 (DVFGKMNKLIKT) lie on the Extracellular side of the membrane. Residues 378–399 (VFAFCSMLCLLNSTVNPIIYAL) traverse the membrane as a helical segment. The Cytoplasmic segment spans residues 400-472 (RSKDLRHAFR…VSTNTSAKAL (73 aa)). Cys415 is lipidated: S-palmitoyl cysteine. A phosphoserine mark is found at Ser425 and Ser429.

This sequence belongs to the G-protein coupled receptor 1 family. Interacts (via C-terminus) with CNRIP1; this interaction attenuates constitutive, but not agonist-dependent, inhibition of voltage-gated Ca(2+) channels in neurons. Associates with G protein alpha subunits, including G(i) alpha-1/GNAI1, G(i) alpha-3/GNAI3 and G(o)-alpha/GNAO1; palmitoylation is important for interaction with GNAI3 and GNAO1. Palmitoylation at Cys-415 is important for recruitment at plasma membrane and lipid rafts and association with G protein alpha subunits. In terms of tissue distribution, expressed in cerebral arterial muscle cells and cerebral cortex (at protein level).

Its subcellular location is the cell membrane. The protein resides in the membrane raft. It localises to the mitochondrion outer membrane. It is found in the cell projection. The protein localises to the axon. Its subcellular location is the presynapse. Its activity is regulated as follows. Hemopressin, a peptide derived from hemoglobin subunit alpha (HBA1 and/or HBA2), acts as an antagonist peptide: hemopressin-binding efficiently blocks cannabinoid receptor CNR1 and subsequent signaling. In terms of biological role, G-protein coupled receptor for endogenous cannabinoids (eCBs), including N-arachidonoylethanolamide (also called anandamide or AEA) and 2-arachidonoylglycerol (2-AG), as well as phytocannabinoids, such as delta(9)-tetrahydrocannabinol (THC). Mediates many cannabinoid-induced effects, acting, among others, on food intake, memory loss, gastrointestinal motility, catalepsy, ambulatory activity, anxiety, chronic pain. Signaling typically involves reduction in cyclic AMP. In the hypothalamus, may have a dual effect on mitochondrial respiration depending upon the agonist dose and possibly upon the cell type. Increases respiration at low doses, while decreases respiration at high doses. At high doses, CNR1 signal transduction involves G-protein alpha-i protein activation and subsequent inhibition of mitochondrial soluble adenylate cyclase, decrease in cyclic AMP concentration, inhibition of protein kinase A (PKA)-dependent phosphorylation of specific subunits of the mitochondrial electron transport system, including NDUFS2. In the hypothalamus, inhibits leptin-induced reactive oxygen species (ROS) formation and mediates cannabinoid-induced increase in SREBF1 and FASN gene expression. In response to cannabinoids, drives the release of orexigenic beta-endorphin, not that of melanocyte-stimulating hormone alpha/alpha-MSH, from hypothalamic POMC neurons, hence promoting food intake. In the hippocampus, regulates cellular respiration and energy production in response to cannabinoids. Involved in cannabinoid-dependent depolarization-induced suppression of inhibition (DSI), a process in which depolarization of CA1 postsynaptic pyramidal neurons mobilizes eCBs, which retrogradely activate presynaptic CB1 receptors, transiently decreasing GABAergic inhibitory neurotransmission. Also reduces excitatory synaptic transmission. In superior cervical ganglions and cerebral vascular smooth muscle cells, inhibits voltage-gated Ca(2+) channels in a constitutive, as well as agonist-dependent manner. In cerebral vascular smooth muscle cells, inhibition of voltage-gated Ca(2+) channels leads to vasodilation and decrease in vascular tone. Induces leptin production in adipocytes and reduces LRP2-mediated leptin clearance in the kidney, hence participating in hyperleptinemia. In adipose tissue, CNR1 signaling leads to increased expression of SREBF1, ACACA and FASN genes. In the liver, activation by endocannabinoids leads to increased de novo lipogenesis and reduced fatty acid catabolism, associated with increased expression of SREBF1/SREBP-1, GCK, ACACA, ACACB and FASN genes. May also affect de novo cholesterol synthesis and HDL-cholesteryl ether uptake. Peripherally modulates energy metabolism. In high carbohydrate diet-induced obesity, may decrease the expression of mitochondrial dihydrolipoyl dehydrogenase/DLD in striated muscles, as well as that of selected glucose/ pyruvate metabolic enzymes, hence affecting energy expenditure through mitochondrial metabolism. In response to cannabinoid anandamide, elicits a pro-inflammatory response in macrophages, which involves NLRP3 inflammasome activation and IL1B and IL18 secretion. In macrophages infiltrating pancreatic islets, this process may participate in the progression of type-2 diabetes and associated loss of pancreatic beta-cells. This Felis catus (Cat) protein is Cannabinoid receptor 1 (CNR1).